Reading from the N-terminus, the 23-residue chain is Caerulein precursor fragment R6 (23 aa).

Expressed by the skin glands.

It localises to the secreted. Functionally, antimicrobial peptide. The chain is Caerulein precursor fragment R6 from Xenopus ruwenzoriensis (Uganda clawed frog).